The following is a 225-amino-acid chain: Small ribosomal subunit protein uS5 (225 aa).

One can recognise an S5 DRBM domain in the interval 57-120 (LEEQVLDVKL…AQAKLSLIKV (64 aa)).

This sequence belongs to the universal ribosomal protein uS5 family. Part of the 30S ribosomal subunit. Contacts protein S4.

Functionally, with S4 and S12 plays an important role in translational accuracy. This is Small ribosomal subunit protein uS5 from Methanococcus vannielii (strain ATCC 35089 / DSM 1224 / JCM 13029 / OCM 148 / SB).